The following is a 50-amino-acid chain: MANKKKVALACSECGSRNYTITENPNRTERLEVQKFCKYCGKHTLHRETK.

It belongs to the bacterial ribosomal protein bL33 family.

This Ligilactobacillus salivarius (strain UCC118) (Lactobacillus salivarius) protein is Large ribosomal subunit protein bL33B.